Consider the following 101-residue polypeptide: Small ribosomal subunit protein uS14 (101 aa).

Belongs to the universal ribosomal protein uS14 family. In terms of assembly, part of the 30S ribosomal subunit. Contacts proteins S3 and S10.

In terms of biological role, binds 16S rRNA, required for the assembly of 30S particles and may also be responsible for determining the conformation of the 16S rRNA at the A site. The chain is Small ribosomal subunit protein uS14 from Delftia acidovorans (strain DSM 14801 / SPH-1).